A 922-amino-acid polypeptide reads, in one-letter code: GPI inositol-deacylase (922 aa).

Residues 1 to 11 are Cytoplasmic-facing; it reads MFLHSVNLWNL. Residues 12 to 32 form a helical membrane-spanning segment; sequence AFYVFMVFLATLGLWDVFFGF. Topologically, residues 33–597 are lumenal; it reads EENKCSMSYM…GQVVRFHGGA (565 aa). S174 is an active-site residue. N-linked (GlcNAc...) asparagine glycosylation is found at N363, N402, and N558. The chain crosses the membrane as a helical span at residues 598–618; the sequence is LPAYVVSSILLAYGGQLYSLL. At 619 to 641 the chain is on the cytoplasmic side; the sequence is STGFCLEYGTMLDKEAKPYKVDP. The chain crosses the membrane as a helical span at residues 642 to 662; it reads FVIMIKFLLGYKWFKELWDAV. Topologically, residues 663–668 are lumenal; the sequence is LLPELD. The chain crosses the membrane as a helical span at residues 669 to 689; that stretch reads AIVLTSQSMCFPLVSLILFLF. Over 690-694 the chain is Cytoplasmic; sequence GTCTA. A helical membrane pass occupies residues 695-715; that stretch reads YWSGLLSSASVQLLSSLWLAL. Residues 716–733 lie on the Lumenal side of the membrane; that stretch reads KRPAELPKDVKVMSPDLP. Residues 734–754 traverse the membrane as a helical segment; sequence VLTVVFLIISWTTCGALAILL. Residues 755–816 are Cytoplasmic-facing; the sequence is SYLYYVFKVV…NDAEDSLRMH (62 aa). Positions 776–801 are disordered; sequence NQPVNPKHSRRSEKKSNHHKDSAIQN. Basic residues predominate over residues 782-793; the sequence is KHSRRSEKKSNH. The helical transmembrane segment at 817–837 threads the bilayer; sequence STVINLLTWVVLLSMPSLIYW. Residues 838–853 are Lumenal-facing; sequence SKNLRYYFKLNPDPCK. A helical transmembrane segment spans residues 854 to 874; sequence PLAFLLIPAIAVLGNTHTVSI. Residues 875–894 lie on the Cytoplasmic side of the membrane; sequence KSSKLLKTASQFPLPLAVGV. Residues 895–915 traverse the membrane as a helical segment; sequence IAFGSSHLYRVPCFVIIPLVF. Topologically, residues 916-922 are lumenal; sequence HSLCNFM.

Belongs to the GPI inositol-deacylase family.

It is found in the endoplasmic reticulum membrane. GPI inositol-deacylase that catalyzes the remove of the acyl chain linked to the 2-OH position of inositol ring from the GPI-anchored protein (GPI-AP) in the endoplasmic reticulum. Initiates the post-attachment remodeling phase of GPI-AP biogenesis and participates in endoplasmic reticulum (ER)-to-Golgi transport of GPI-anchored protein. This chain is GPI inositol-deacylase, found in Rattus norvegicus (Rat).